Here is a 72-residue protein sequence, read N- to C-terminus: Translation initiation factor IF-1 (72 aa).

The region spanning 1 to 72 (MSKEDHIEME…SKARITFRHR (72 aa)) is the S1-like domain.

Belongs to the IF-1 family. Component of the 30S ribosomal translation pre-initiation complex which assembles on the 30S ribosome in the order IF-2 and IF-3, IF-1 and N-formylmethionyl-tRNA(fMet); mRNA recruitment can occur at any time during PIC assembly.

It is found in the cytoplasm. One of the essential components for the initiation of protein synthesis. Stabilizes the binding of IF-2 and IF-3 on the 30S subunit to which N-formylmethionyl-tRNA(fMet) subsequently binds. Helps modulate mRNA selection, yielding the 30S pre-initiation complex (PIC). Upon addition of the 50S ribosomal subunit IF-1, IF-2 and IF-3 are released leaving the mature 70S translation initiation complex. The chain is Translation initiation factor IF-1 from Methylococcus capsulatus (strain ATCC 33009 / NCIMB 11132 / Bath).